Consider the following 290-residue polypeptide: Glycine--tRNA ligase alpha subunit (290 aa).

It belongs to the class-II aminoacyl-tRNA synthetase family. As to quaternary structure, tetramer of two alpha and two beta subunits.

The protein localises to the cytoplasm. The catalysed reaction is tRNA(Gly) + glycine + ATP = glycyl-tRNA(Gly) + AMP + diphosphate. The protein is Glycine--tRNA ligase alpha subunit of Nitratiruptor sp. (strain SB155-2).